Consider the following 166-residue polypeptide: Peroxynitrite isomerase Rv2717c (166 aa).

The GXWXGXG motif lies at 28–34; it reads GTWRGQG. Heme b-binding residues include T40 and H158.

Belongs to the nitrobindin family. As to quaternary structure, homodimer. Heme b is required as a cofactor.

The protein localises to the cytoplasm. The enzyme catalyses peroxynitrite = nitrate. Its pathway is nitrogen metabolism. Its function is as follows. Heme-binding protein able to scavenge peroxynitrite and to protect free L-tyrosine against peroxynitrite-mediated nitration, by acting as a peroxynitrite isomerase that converts peroxynitrite to nitrate. Therefore, this protein likely plays a role in peroxynitrite sensing and in the detoxification of reactive nitrogen and oxygen species (RNS and ROS, respectively). Is able to bind nitric oxide (NO) in vitro, but may act as a sensor of peroxynitrite levels in vivo. The polypeptide is Peroxynitrite isomerase Rv2717c (Arabidopsis thaliana (Mouse-ear cress)).